The chain runs to 86 residues: Alpha-mammal toxin Ts3 (86 aa).

The signal sequence occupies residues 1 to 19 (MNYFILLVVVCLLTAGTEG). The LCN-type CS-alpha/beta domain occupies 21 to 82 (KDGYPVEYDN…EPTKTNGKCK (62 aa)). Cystine bridges form between C31-C81, C35-C57, C43-C64, and C47-C66. Position 83 is a serine amide (S83).

Expressed by the venom gland.

It is found in the secreted. In terms of biological role, alpha toxins bind voltage-independently at site-3 of sodium channels (Nav) and inhibit the inactivation of the activated channels, thereby blocking neuronal transmission. This synthetic toxin inhibits inactivation of rat Nav1.4/SCN4A (when tested at 201 nM). In addition, it has been shown to cause a persistent sodium channel activation in nitrergic inhibitory fibers innervating the rabbit corpus cavernosum, resulting in NO release and cavernosal smooth muscle relaxation. This toxin is active against mammals. Its function is as follows. this synthetic peptide with a Ser at position 31 (C12S) acts as a bradykinin-potentiating peptide (BPP). Induces endothelium-dependent vasodilation that is reverted by NO synthase inhibitor, suggesting it activates molecular targets on vascular endothelium leading to NO production and vasodilation. It appears to induce vasodilation through muscarinic acetylcholine receptors (AChR) M2 (CHRM2) and M3 (CHRM3). Does not inhibit the angiotensin-converting enzyme (ACE). Does not act via bradykinin B2 receptor. This is Alpha-mammal toxin Ts3 from Tityus serrulatus (Brazilian scorpion).